The chain runs to 337 residues: Phosphate acyltransferase (337 aa).

This sequence belongs to the PlsX family. Homodimer. Probably interacts with PlsY.

It is found in the cytoplasm. The catalysed reaction is a fatty acyl-[ACP] + phosphate = an acyl phosphate + holo-[ACP]. The protein operates within lipid metabolism; phospholipid metabolism. Functionally, catalyzes the reversible formation of acyl-phosphate (acyl-PO(4)) from acyl-[acyl-carrier-protein] (acyl-ACP). This enzyme utilizes acyl-ACP as fatty acyl donor, but not acyl-CoA. The protein is Phosphate acyltransferase of Ehrlichia canis (strain Jake).